Here is a 521-residue protein sequence, read N- to C-terminus: Ribonuclease Y (521 aa).

A helical transmembrane segment spans residues 1–21; that stretch reads MFFIEHPFVYLGLDLIVGCLI. The KH domain occupies 211–271; it reads TVSMVPLPSD…VRREVARLAL (61 aa). The HD domain occupies 337 to 430; the sequence is VLQHSLEVAF…VQAADALSGA (94 aa).

It belongs to the RNase Y family.

The protein localises to the cell membrane. Functionally, endoribonuclease that initiates mRNA decay. The sequence is that of Ribonuclease Y from Desulfotalea psychrophila (strain LSv54 / DSM 12343).